The following is a 510-amino-acid chain: MAVFISSSGSPGRATATTTTTTTLLLAVLAAAAAAGLLLAPVAARGSPPEHDKQLQLQQQEDDRIPGLPGQPNGVAFGMYGGYVTIDDNNGRALYYWFQEADTADPAAAPLVLWLNGGPGCSSIGLGAMQELGPFRVHTNGESLLLNEYAWNKAANILFAESPAGVVFSYSNTSSDLSMGDDKMAQDTYTFLVKWFERFPHYNYREFYIAGESGHFIPQLSQVVYRNRNNSPFINFQGLLVSSGLTNDHEDMIGMFELWWHHGLISDETRDSGLKVCPGTSFMHPTPECTEVWNKALAEQGNINPYTIYTPTCDREPSPYQRRFWAPHGRAAPPPLMLPPYDPCAVFNSINYLNLPEVQTALHANVSGIVEYPWTVCSNTIFDQWGQAADDLLPVYRELIQAGLRVWVYSGDTDSVVPVSSTRRSLAALELPVKTSWYPWYMAPTEREVGGWSVQYEGLTYVSPSGAGHLVPVHRPAQAFLLFKQFLKGEPMPAEEKNDILLPSEKAPFY.

Residues Met1–Ala34 form the signal peptide. Asn116–Gly118 is a substrate binding site. 3 cysteine pairs are disulfide-bonded: Cys121/Cys377, Cys277/Cys289, and Cys313/Cys344. Residue Asn172 is glycosylated (N-linked (GlcNAc...) asparagine). Substrate is bound at residue Glu212 to Ser213. The active site involves Ser213. N-linked (GlcNAc...) asparagine glycosylation is present at Asn365. Residues Asp414 and His469 contribute to the active site. Ser465–His469 provides a ligand contact to substrate.

Belongs to the peptidase S10 family. In terms of assembly, heterotetramer of two A and two B chains. The A and B chains are linked by a disulfide bond. Post-translationally, the N-terminus of chain A is blocked. Primary leaves of seedlings.

The catalysed reaction is (S)-4-hydroxymandelonitrile = 4-hydroxybenzaldehyde + hydrogen cyanide. Functionally, involved in cyanogenesis, the release of HCN from injured tissues. Is involved in the catabolism of the cyanogenic glycoside dhurrin. The chain is P-(S)-hydroxymandelonitrile lyase from Sorghum bicolor (Sorghum).